Consider the following 59-residue polypeptide: Large ribosomal subunit protein bL32 (59 aa).

Over residues 1–16 (MAVPKRKTSPSRRGMR) the composition is skewed to basic residues. A disordered region spans residues 1 to 20 (MAVPKRKTSPSRRGMRRSHD).

The protein belongs to the bacterial ribosomal protein bL32 family.

The polypeptide is Large ribosomal subunit protein bL32 (Novosphingobium aromaticivorans (strain ATCC 700278 / DSM 12444 / CCUG 56034 / CIP 105152 / NBRC 16084 / F199)).